A 141-amino-acid polypeptide reads, in one-letter code: Putative antiporter subunit mnhB2 (141 aa).

Transmembrane regions (helical) follow at residues 10 to 30 (TVTK…FFAG), 35 to 55 (GGGF…FLAF), 70 to 90 (ILMI…MFFG), and 114 to 134 (ITLF…TVML).

It belongs to the CPA3 antiporters (TC 2.A.63) subunit B family. In terms of assembly, may form a heterooligomeric complex that consists of seven subunits: mnhA2, mnhB2, mnhC2, mnhD2, mnhE2, mnhF2 and mnhG2.

Its subcellular location is the cell membrane. This Staphylococcus aureus (strain Mu3 / ATCC 700698) protein is Putative antiporter subunit mnhB2 (mnhB2).